Here is a 269-residue protein sequence, read N- to C-terminus: MIISFVNNKGGVLKTTMATNVAGSLVKLCPERRKVILDLDGQGNVSASFGQNPERLNNTLIDILLKVPKFSGSNNFIEIDDCLLSVYEGLDILPCNFELNFADIDISRKKYKASDIAEIVKQLAKRYEFVLLDTPPNMATLVSTAMSLSDVIVIPFEPDQYSMLGLMRIVETIDTFKEKNTNLKTILVPTKVNVRTRLHNEVIDLAKTKAKKNNVAFSKNFVSLTSKSSAAVGYEKLPISLVSSPSKKYLNEYLEITKEILNLANYNVH.

It belongs to the ParA family.

This chain is ParA family protein MG470, found in Mycoplasma genitalium (strain ATCC 33530 / DSM 19775 / NCTC 10195 / G37) (Mycoplasmoides genitalium).